The following is a 467-amino-acid chain: Probable citrate synthase 2, mitochondrial (467 aa).

Residues histidine 303, histidine 349, and aspartate 404 contribute to the active site.

Belongs to the citrate synthase family. Homodimer.

It localises to the mitochondrion matrix. The enzyme catalyses oxaloacetate + acetyl-CoA + H2O = citrate + CoA + H(+). The protein operates within carbohydrate metabolism; tricarboxylic acid cycle; isocitrate from oxaloacetate: step 1/2. The polypeptide is Probable citrate synthase 2, mitochondrial (Aedes aegypti (Yellowfever mosquito)).